Consider the following 453-residue polypeptide: Armadillo repeat-containing X-linked protein 1 (453 aa).

The Mitochondrial intermembrane portion of the chain corresponds to 1-6; that stretch reads MGRTRE. Mitochondrion outer membrane (MOM)-targeting sequence stretches follow at residues 1 to 6 and 26 to 36; these read MGRTRE and RLAWGRDENEK. The chain crosses the membrane as a helical; Signal-anchor span at residues 7 to 29; the sequence is AGCVAAGVVIGAGACYCVYRLAW. The Cytoplasmic portion of the chain corresponds to 30–453; it reads GRDENEKIWD…VKVLKVLTKL (424 aa). Disordered regions lie at residues 58–77 and 132–182; these read AKTN…SEVK and ISGN…RAPA. Positions 167–177 are enriched in basic residues; the sequence is GKSKGKARSKS. 4 ARM repeats span residues 195–235, 237–276, 358–398, and 415–453; these read PYKI…NNAA, SFNQ…NLSV, PAMT…NIND, and SSLF…LTKL.

The protein belongs to the eutherian X-chromosome-specific Armcx family. Interacts with MIRO1. As to expression, expressed at high levels ovary, heart, testis, prostate, brain, spleen and colon. Expressed at very low levels in liver and thymus. Not expressed in peripheral blood leukocytes. Not or reduced expressed in lung, prostate, colon, pancreas and ovarian carcinomas.

The protein resides in the mitochondrion. The protein localises to the mitochondrion outer membrane. Functionally, regulates mitochondrial transport during axon regeneration. Increases the proportion of motile mitochondria by recruiting stationary mitochondria into the motile pool. Enhances mitochondria movement and neurite growth in both adult axons and embryonic neurons. Promotes neuronal survival and axon regeneration after nerve injury. May link mitochondria to the Trak1-kinesin motor complex via its interaction with MIRO1. The protein is Armadillo repeat-containing X-linked protein 1 (ARMCX1) of Homo sapiens (Human).